Reading from the N-terminus, the 563-residue chain is Arginine--tRNA ligase (563 aa).

The 'HIGH' region motif lies at 123–133; sequence PNIAKDMHVGH.

The protein belongs to the class-I aminoacyl-tRNA synthetase family. Monomer.

The protein localises to the cytoplasm. It catalyses the reaction tRNA(Arg) + L-arginine + ATP = L-arginyl-tRNA(Arg) + AMP + diphosphate. The sequence is that of Arginine--tRNA ligase from Chlamydia trachomatis serovar A (strain ATCC VR-571B / DSM 19440 / HAR-13).